Consider the following 408-residue polypeptide: Tryptophan synthase beta chain (408 aa).

An N6-(pyridoxal phosphate)lysine modification is found at lysine 90.

This sequence belongs to the TrpB family. In terms of assembly, tetramer of two alpha and two beta chains. Pyridoxal 5'-phosphate is required as a cofactor.

The enzyme catalyses (1S,2R)-1-C-(indol-3-yl)glycerol 3-phosphate + L-serine = D-glyceraldehyde 3-phosphate + L-tryptophan + H2O. Its pathway is amino-acid biosynthesis; L-tryptophan biosynthesis; L-tryptophan from chorismate: step 5/5. Its function is as follows. The beta subunit is responsible for the synthesis of L-tryptophan from indole and L-serine. This Bacillus licheniformis (strain ATCC 14580 / DSM 13 / JCM 2505 / CCUG 7422 / NBRC 12200 / NCIMB 9375 / NCTC 10341 / NRRL NRS-1264 / Gibson 46) protein is Tryptophan synthase beta chain.